Here is a 472-residue protein sequence, read N- to C-terminus: ATP-dependent rRNA helicase rrp3 (472 aa).

Positions 1-52 (MRDVKKRKIAHEAPEHGSDTESTSSHKSVAQQDDPLETQDEATATESRPAPK) are disordered. Residues 10-19 (AHEAPEHGSD) are compositionally biased toward basic and acidic residues. Residues 20-31 (TESTSSHKSVAQ) show a composition bias toward polar residues. Positions 52–80 (KSFKDLGIIDQLCEACETMGYKAPTPIQA) match the Q motif motif. Positions 83 to 254 (IPLALQGRDL…RASLSNPLRV (172 aa)) constitute a Helicase ATP-binding domain. 96–103 (AETGSGKT) provides a ligand contact to ATP. The short motif at 202-205 (DEAD) is the DEAD box element. Positions 282 to 426 (YLVYLLNEFV…EYELEKDEVM (145 aa)) constitute a Helicase C-terminal domain. Positions 444–472 (KNFDEKRGTKAKKFGKGKRSRDEMDQEEG) are disordered. The span at 452–462 (TKAKKFGKGKR) shows a compositional bias: basic residues.

This sequence belongs to the DEAD box helicase family. DDX47/RRP3 subfamily. Interacts with the SSU processome.

It localises to the nucleus. It catalyses the reaction ATP + H2O = ADP + phosphate + H(+). ATP-dependent rRNA helicase required for pre-ribosomal RNA processing. Involved in the maturation of the 35S-pre-rRNA and to its cleavage to mature 18S rRNA. The chain is ATP-dependent rRNA helicase rrp3 from Aspergillus fumigatus (strain ATCC MYA-4609 / CBS 101355 / FGSC A1100 / Af293) (Neosartorya fumigata).